The chain runs to 245 residues: MPRYCIVNADDFGYSKGVNYGILEAFQNGVVTSATLMANMPAAEHAARLAKDHPELGVGIHFVLTCGRPLADVPSLVNENGEFPRRGEALVGARRGDIERELCAQLERFFSFGLTPTHIDSHHHVHEHPNVFPVVEQLAERYRLPIRPVRTARPHRLPTVDVFFPDFYGDGLTKDRFISLIDRIGDGQTAEVMCHPAYIDVPLASGSSYCQQRVEELAVLTDPTLVAEMAERGVQLITYREFYKL.

Mg(2+)-binding residues include histidine 61 and histidine 122.

The protein belongs to the YdjC deacetylase family. Mg(2+) serves as cofactor.

Functionally, probably catalyzes the deacetylation of acetylated carbohydrates an important step in the degradation of oligosaccharides. The chain is Carbohydrate deacetylase (celC) from Geobacillus stearothermophilus (Bacillus stearothermophilus).